The primary structure comprises 564 residues: Mitochondrial distribution and morphology protein 34 (564 aa).

Positions 1–208 constitute an SMP-LTD domain; it reads MAFNFNWSPL…VPEYRDRESE (208 aa). Disordered regions lie at residues 208 to 240, 336 to 397, 404 to 423, 434 to 517, and 532 to 564; these read ESVNTLDQSSGPGQDPLASPPQDPVDASGNALN, SGGS…SAPT, QFSEEKNDDPVTPPLAPQND, RISQ…DPRQ, and IQEEKVGPSGSRPFPDFWDDHSREEIPPPAYGH. The segment covering 209 to 219 has biased composition (polar residues); the sequence is SVNTLDQSSGP. Residues 351–365 are compositionally biased toward basic residues; sequence SGRHPRPHGKKRKKR. Positions 366–376 are enriched in basic and acidic residues; it reads VVDLRRPKTTD. Positions 380-390 are enriched in low complexity; it reads SVSGESVFSSE. Composition is skewed to polar residues over residues 438-462 and 477-503; these read GEHTLTRRSVPSMSEVAQPSSSRNS and PRNSIRLPSSDRANNPLTTAHLPSSAI.

Belongs to the MDM34 family. As to quaternary structure, component of the ER-mitochondria encounter structure (ERMES) or MDM complex, composed of mmm1, mdm10, mdm12 and mdm34.

It localises to the mitochondrion outer membrane. Functionally, component of the ERMES/MDM complex, which serves as a molecular tether to connect the endoplasmic reticulum (ER) and mitochondria. Components of this complex are involved in the control of mitochondrial shape and protein biogenesis, and function in nonvesicular lipid trafficking between the ER and mitochondria. Mdm34 is required for the interaction of the ER-resident membrane protein mmm1 and the outer mitochondrial membrane-resident beta-barrel protein mdm10. The chain is Mitochondrial distribution and morphology protein 34 from Talaromyces stipitatus (strain ATCC 10500 / CBS 375.48 / QM 6759 / NRRL 1006) (Penicillium stipitatum).